We begin with the raw amino-acid sequence, 1225 residues long: ATP-dependent helicase/nuclease subunit A (1225 aa).

Positions 11-478 constitute a UvrD-like helicase ATP-binding domain; sequence AQWTDAQWKS…IDLSKNFRSR (468 aa). 32–39 serves as a coordination point for ATP; sequence AAAGSGKT. The UvrD-like helicase C-terminal domain occupies 479–790; that stretch reads KEVLATTNYL…RMMTVHSSKG (312 aa). A compositionally biased stretch (basic and acidic residues) spans 999-1014; that stretch reads EKPSKQSVSELKRQLE. The segment at 999–1018 is disordered; the sequence is EKPSKQSVSELKRQLETEES.

Belongs to the helicase family. AddA subfamily. As to quaternary structure, heterodimer of AddA and AddB/RexB. Mg(2+) serves as cofactor.

The catalysed reaction is Couples ATP hydrolysis with the unwinding of duplex DNA by translocating in the 3'-5' direction.. The enzyme catalyses ATP + H2O = ADP + phosphate + H(+). Functionally, the heterodimer acts as both an ATP-dependent DNA helicase and an ATP-dependent, dual-direction single-stranded exonuclease. Recognizes the chi site generating a DNA molecule suitable for the initiation of homologous recombination. The AddA nuclease domain is required for chi fragment generation; this subunit has the helicase and 3' -&gt; 5' nuclease activities. The polypeptide is ATP-dependent helicase/nuclease subunit A (Staphylococcus haemolyticus (strain JCSC1435)).